The primary structure comprises 569 residues: Neutral leucine aminopeptidase, chloroplastic (569 aa).

Residues 1–48 (MNGVLCSSSSSFHSYPSIFTKFQSSPIWSFSISVTPLCSRRAKRMAHS) constitute a chloroplast transit peptide. Residues Lys-339 and Asp-344 each coordinate Mn(2+). Lys-351 is a catalytic residue. The Mn(2+) site is built by Asp-364, Asp-424, and Glu-426. Residue Arg-428 is part of the active site.

This sequence belongs to the peptidase M17 family. Homohexamer (dimer of homotrimers). Mn(2+) serves as cofactor. Expressed constitutively at low levels. Expressed in vegetative and reproductive organs, including leaves, stems, roots, cotyledons (after imbibition), pistils, sepals, petals, stamens, and floral buds (at protein level). Present at very low levels in healthy leaves.

It localises to the plastid. The protein resides in the chloroplast. It catalyses the reaction Release of an N-terminal amino acid, Xaa-|-Yaa-, in which Xaa is preferably Leu, but may be other amino acids including Pro although not Arg or Lys, and Yaa may be Pro. Amino acid amides and methyl esters are also readily hydrolyzed, but rates on arylamides are exceedingly low.. The enzyme catalyses Release of N-terminal proline from a peptide.. Functionally, catalyzes the removal of unsubstituted N-terminal amino acids from various peptides. When associated as homohexamer, catalyzes the proteolyzes of Xaa-Leu dipeptides. Possesses leucine aminopeptidase activity against the model substrate leucine-amido methyl coumarin. Presumably involved in the processing and regular turnover of intracellular proteins. In terms of biological role, functions as a molecular chaperone to protect proteins from heat-induced damage. This chain is Neutral leucine aminopeptidase, chloroplastic, found in Solanum lycopersicum (Tomato).